A 505-amino-acid chain; its full sequence is Protein disulfide-isomerase (505 aa).

The signal sequence occupies residues 1–20 (MHKAQKFALGLLAAAAVATA). 2 consecutive Thioredoxin domains span residues 21-128 (SDVV…QSLP) and 335-465 (FVAG…ENGK). Catalysis depends on nucleophile residues Cys50, Cys53, Cys385, and Cys388. 2 cysteine pairs are disulfide-bonded: Cys50/Cys53 and Cys385/Cys388. The disordered stretch occupies residues 470–505 (ISEDAEETSSATETTTETATKSEEAAKETATEHDEL). The span at 477–488 (TSSATETTTETA) shows a compositional bias: low complexity. Residues 489–505 (TKSEEAAKETATEHDEL) show a composition bias toward basic and acidic residues. The Prevents secretion from ER motif lies at 502-505 (HDEL).

It belongs to the protein disulfide isomerase family.

The protein localises to the endoplasmic reticulum lumen. The catalysed reaction is Catalyzes the rearrangement of -S-S- bonds in proteins.. In terms of biological role, participates in the folding of proteins containing disulfide bonds, may be involved in glycosylation, prolyl hydroxylation and triglyceride transfer. The protein is Protein disulfide-isomerase of Humicola insolens (Soft-rot fungus).